The chain runs to 518 residues: Glutamate--cysteine ligase (518 aa).

This sequence belongs to the glutamate--cysteine ligase type 1 family. Type 1 subfamily.

It catalyses the reaction L-cysteine + L-glutamate + ATP = gamma-L-glutamyl-L-cysteine + ADP + phosphate + H(+). Its pathway is sulfur metabolism; glutathione biosynthesis; glutathione from L-cysteine and L-glutamate: step 1/2. The chain is Glutamate--cysteine ligase (gshA) from Buchnera aphidicola subsp. Acyrthosiphon pisum (strain APS) (Acyrthosiphon pisum symbiotic bacterium).